We begin with the raw amino-acid sequence, 284 residues long: NAD kinase (284 aa).

Residue aspartate 60 is the Proton acceptor of the active site. Residues 60–61 (DG), 134–135 (NE), arginine 145, lysine 162, aspartate 164, 175–180 (TAYSFS), and glutamine 234 contribute to the NAD(+) site.

This sequence belongs to the NAD kinase family. Requires a divalent metal cation as cofactor.

Its subcellular location is the cytoplasm. It catalyses the reaction NAD(+) + ATP = ADP + NADP(+) + H(+). Involved in the regulation of the intracellular balance of NAD and NADP, and is a key enzyme in the biosynthesis of NADP. Catalyzes specifically the phosphorylation on 2'-hydroxyl of the adenosine moiety of NAD to yield NADP. The protein is NAD kinase of Clostridium botulinum (strain Alaska E43 / Type E3).